The chain runs to 299 residues: Acetaldehyde dehydrogenase (299 aa).

Cysteine 126 functions as the Acyl-thioester intermediate in the catalytic mechanism. NAD(+)-binding positions include 157-165 (SAGPGTRQN) and asparagine 267.

Belongs to the acetaldehyde dehydrogenase family.

It carries out the reaction acetaldehyde + NAD(+) + CoA = acetyl-CoA + NADH + H(+). The sequence is that of Acetaldehyde dehydrogenase (mhpF) from Carboxydothermus hydrogenoformans (strain ATCC BAA-161 / DSM 6008 / Z-2901).